Reading from the N-terminus, the 210-residue chain is MVKYPTGSVMPLRAAQRQGKKALLKKASFSDRGMTLEQQINESNQYYLDAGIAVVHKKPTPIQIVKVDYPKRSRAVIREAYFRQASTTDYNGVYQGYYLDFEAKETRNKTSFPLKNFHEHQILHLEQCLDQEGICFALIGFMTLERYFVTPASFLIQAWQNWKAAGKSSMTLAEIEANSFEIKSGFCPALPYLEAVDRIIADRKQEHGNK.

Positions 87, 89, 102, and 121 each coordinate Mg(2+).

This sequence belongs to the RecU family. It depends on Mg(2+) as a cofactor.

The protein resides in the cytoplasm. It carries out the reaction Endonucleolytic cleavage at a junction such as a reciprocal single-stranded crossover between two homologous DNA duplexes (Holliday junction).. Its function is as follows. Endonuclease that resolves Holliday junction intermediates in genetic recombination. Cleaves mobile four-strand junctions by introducing symmetrical nicks in paired strands. Promotes annealing of linear ssDNA with homologous dsDNA. Required for DNA repair, homologous recombination and chromosome segregation. The sequence is that of Holliday junction resolvase RecU from Lactobacillus delbrueckii subsp. bulgaricus (strain ATCC 11842 / DSM 20081 / BCRC 10696 / JCM 1002 / NBRC 13953 / NCIMB 11778 / NCTC 12712 / WDCM 00102 / Lb 14).